Consider the following 123-residue polypeptide: Holo-[acyl-carrier-protein] synthase (123 aa).

Aspartate 8 and glutamate 60 together coordinate Mg(2+).

It belongs to the P-Pant transferase superfamily. AcpS family. Mg(2+) is required as a cofactor.

It localises to the cytoplasm. The catalysed reaction is apo-[ACP] + CoA = holo-[ACP] + adenosine 3',5'-bisphosphate + H(+). Functionally, transfers the 4'-phosphopantetheine moiety from coenzyme A to a Ser of acyl-carrier-protein. The protein is Holo-[acyl-carrier-protein] synthase of Ehrlichia ruminantium (strain Gardel).